The chain runs to 316 residues: ADDLTTLRNGTLDRGITPDCTFNEKDIELHVYSRDKRNGIILKKEILKNYDLFQKSQISHQIAILIHGFLSTGNNENFDAMAKALIEIDNFLVISVDWKKGACNAFASTNDVLGYSQAVGNTRHVGKYVADFTKLLVEQYKVPMSNIRLIGHSLGAHTSGFAGKEVQRLKLGKYKEIIGLDPAGPSFLTNKCPNRLCETDAEYVQAIHTSAILGVYYNVGSVDFYVNYGKSQPGCSEPSCSHTKAVKYLTECIKRECCLIGTPWKSYFSTPKPISQCKRDTCVCVGLNAQSYPAKGSFYVPVEKDAPYCHNEGIKL.

A signal peptide spans 1 to 4 (ADDL). Residues 5–14 (TTLRNGTLDR) constitute a propeptide that is removed on maturation. C20 and C103 form a disulfide bridge. The active-site Nucleophile is S153. Residue D181 is the Charge relay system of the active site. Cystine bridges form between C192/C197 and C235/C240. H242 serves as the catalytic Charge relay system. Intrachain disulfides connect C257/C284, C258/C309, and C277/C282.

The protein belongs to the AB hydrolase superfamily. Lipase family. Expressed by the venom gland.

Its subcellular location is the secreted. The catalysed reaction is a 1,2-diacyl-sn-glycero-3-phosphocholine + H2O = a 2-acyl-sn-glycero-3-phosphocholine + a fatty acid + H(+). Its function is as follows. Catalyzes the hydrolysis of phosphatidylcholine with phospholipase A1 activity. May act as an allergen and induce hemolytic activity. The polypeptide is Phospholipase A1 2 (Polistes dominula (European paper wasp)).